A 130-amino-acid polypeptide reads, in one-letter code: Cholecystokinin (130 aa).

Positions 1-20 (MYGGICICVLLAALSVSSLG) are cleaved as a signal peptide. Residues 21 to 48 (QQPAGSHDGSPVAAELQQSLTEPHRHSR) constitute a propeptide that is removed on maturation. Positions 21 to 63 (QQPAGSHDGSPVAAELQQSLTEPHRHSRAPSSAGPLKPAPRLD) are disordered. Y112 bears the Sulfotyrosine mark. The residue at position 118 (F118) is a Phenylalanine amide. Residues 122 to 130 (SAEEYEYSS) constitute a propeptide that is removed on maturation. Residues Y126 and Y128 each carry the sulfotyrosine modification.

Belongs to the gastrin/cholecystokinin family. Post-translationally, the precursor is cleaved by proteases to produce a number of active cholecystokinins. In terms of tissue distribution, in the small intestine, the major production site is around the vitelline diverticulum.

It is found in the secreted. Functionally, this peptide hormone induces gall bladder contraction and the release of pancreatic enzymes in the gut. Its function in the brain is not clear. It also decreases food intake and regulates gastrointestinal physiological processes. This chain is Cholecystokinin (CCK), found in Gallus gallus (Chicken).